A 271-amino-acid chain; its full sequence is DNA repair protein RecO (271 aa).

Basic and acidic residues predominate over residues 249 to 264 (VRVEDSVRQDGDRDST). The segment at 249-271 (VRVEDSVRQDGDRDSTTRTSSPA) is disordered.

This sequence belongs to the RecO family.

In terms of biological role, involved in DNA repair and RecF pathway recombination. This chain is DNA repair protein RecO, found in Rhodococcus jostii (strain RHA1).